The following is a 220-amino-acid chain: Probable nicotinate-nucleotide adenylyltransferase (220 aa).

It belongs to the NadD family.

The catalysed reaction is nicotinate beta-D-ribonucleotide + ATP + H(+) = deamido-NAD(+) + diphosphate. The protein operates within cofactor biosynthesis; NAD(+) biosynthesis; deamido-NAD(+) from nicotinate D-ribonucleotide: step 1/1. In terms of biological role, catalyzes the reversible adenylation of nicotinate mononucleotide (NaMN) to nicotinic acid adenine dinucleotide (NaAD). The chain is Probable nicotinate-nucleotide adenylyltransferase from Yersinia pseudotuberculosis serotype O:1b (strain IP 31758).